The chain runs to 885 residues: DNA-directed RNA polymerase subunit Rpo1N (885 aa).

Positions 60, 63, 70, 73, 100, 103, 150, and 153 each coordinate Zn(2+). Mg(2+) is bound by residues aspartate 464, aspartate 466, and aspartate 468.

This sequence belongs to the RNA polymerase beta' chain family. As to quaternary structure, part of the RNA polymerase complex. Requires Mg(2+) as cofactor. Zn(2+) is required as a cofactor.

The protein resides in the cytoplasm. The catalysed reaction is RNA(n) + a ribonucleoside 5'-triphosphate = RNA(n+1) + diphosphate. DNA-dependent RNA polymerase (RNAP) catalyzes the transcription of DNA into RNA using the four ribonucleoside triphosphates as substrates. Forms the clamp head domain. This Thermoplasma acidophilum (strain ATCC 25905 / DSM 1728 / JCM 9062 / NBRC 15155 / AMRC-C165) protein is DNA-directed RNA polymerase subunit Rpo1N.